The following is a 228-amino-acid chain: Cytidylate kinase (228 aa).

Position 12-20 (12-20 (GPSGSGKGT)) interacts with ATP.

The protein belongs to the cytidylate kinase family. Type 1 subfamily.

The protein localises to the cytoplasm. The enzyme catalyses CMP + ATP = CDP + ADP. It catalyses the reaction dCMP + ATP = dCDP + ADP. The sequence is that of Cytidylate kinase from Pseudomonas putida (strain W619).